Consider the following 78-residue polypeptide: Acyl carrier protein (78 aa).

Positions 2 to 77 (SNIEQQVKKI…LAIDYINAHN (76 aa)) constitute a Carrier domain. At S37 the chain carries O-(pantetheine 4'-phosphoryl)serine.

It belongs to the acyl carrier protein (ACP) family. 4'-phosphopantetheine is transferred from CoA to a specific serine of apo-ACP by AcpS. This modification is essential for activity because fatty acids are bound in thioester linkage to the sulfhydryl of the prosthetic group.

It is found in the cytoplasm. It functions in the pathway lipid metabolism; fatty acid biosynthesis. Carrier of the growing fatty acid chain in fatty acid biosynthesis. The protein is Acyl carrier protein of Neisseria gonorrhoeae (strain ATCC 700825 / FA 1090).